An 89-amino-acid chain; its full sequence is Elongation factor 1-beta (89 aa).

Belongs to the EF-1-beta/EF-1-delta family.

Promotes the exchange of GDP for GTP in EF-1-alpha/GDP, thus allowing the regeneration of EF-1-alpha/GTP that could then be used to form the ternary complex EF-1-alpha/GTP/AAtRNA. The chain is Elongation factor 1-beta from Methanococcus vannielii (strain ATCC 35089 / DSM 1224 / JCM 13029 / OCM 148 / SB).